We begin with the raw amino-acid sequence, 419 residues long: Gamma-glutamyl phosphate reductase (419 aa).

It belongs to the gamma-glutamyl phosphate reductase family.

The protein localises to the cytoplasm. It carries out the reaction L-glutamate 5-semialdehyde + phosphate + NADP(+) = L-glutamyl 5-phosphate + NADPH + H(+). Its pathway is amino-acid biosynthesis; L-proline biosynthesis; L-glutamate 5-semialdehyde from L-glutamate: step 2/2. Catalyzes the NADPH-dependent reduction of L-glutamate 5-phosphate into L-glutamate 5-semialdehyde and phosphate. The product spontaneously undergoes cyclization to form 1-pyrroline-5-carboxylate. This is Gamma-glutamyl phosphate reductase from Oleidesulfovibrio alaskensis (strain ATCC BAA-1058 / DSM 17464 / G20) (Desulfovibrio alaskensis).